The primary structure comprises 211 residues: uncharacterized protein (211 aa).

3 helical membrane passes run 22 to 42 (FINFVRIAICIVMVWIGGLKV), 111 to 131 (IIGATIVTVGLLTLSGIWFPV), and 133 to 153 (GMAGGLLTFGMSIVTLSFMIT).

It to E.coli YkgB. This sequence to H.influenzae HI_0219.

The protein localises to the cell membrane. This is an uncharacterized protein from Mannheimia haemolytica (Pasteurella haemolytica).